Here is a 183-residue protein sequence, read N- to C-terminus: Large ribosomal subunit protein uL6 (183 aa).

This sequence belongs to the universal ribosomal protein uL6 family. As to quaternary structure, part of the 50S ribosomal subunit.

Functionally, this protein binds to the 23S rRNA, and is important in its secondary structure. It is located near the subunit interface in the base of the L7/L12 stalk, and near the tRNA binding site of the peptidyltransferase center. The protein is Large ribosomal subunit protein uL6 of Chlamydia abortus (strain DSM 27085 / S26/3) (Chlamydophila abortus).